Here is a 99-residue protein sequence, read N- to C-terminus: Imizoquin biosynthesis cluster protein A (99 aa).

Its pathway is secondary metabolite biosynthesis. Functionally, part of the gene cluster that mediates the biosynthesis of imizoquins A to D, tripeptide-derived alkaloids that serve a protective role against oxidative stress that are essential for normal germination. ImqB is a canonical three-module NRPS that assembles the tripeptide backbone of the imizoquins via condensation of Trp, Tyr, and Leu-derived precursors. N-methylation by imqF and phenol oxidation by imqC, followed by cyclization via the FAD-dependent oxidase imqH carry out the three-step transformation of L-tyrosine into tetrahydroisoquinoline. Importantly, this sequence requires the presence of a free amine in the tyrosine moiety, indicating that isoquinoline formation occurs prior to peptide bond formation. The imidazolidin-4-one ring of imizoquins could form following additional oxidation of the methyl-derived bridgehead carbon by imqH. Lastly, O-methylation by imqG and leucine hydroxylation by imqE complete biosynthesis of the imizoquins. The sequence is that of Imizoquin biosynthesis cluster protein A from Aspergillus flavus (strain ATCC 200026 / FGSC A1120 / IAM 13836 / NRRL 3357 / JCM 12722 / SRRC 167).